The primary structure comprises 319 residues: Ankyrin repeat domain-containing protein 1 (319 aa).

Residues 61–89 adopt a coiled-coil conformation; the sequence is KTEKQREAELKKKKLEQRSKLENLEDLEI. 5 ANK repeats span residues 152–181, 185–214, 218–247, 251–280, and 284–315; these read YKRT…QIEF, LEST…KISA, LLST…DLNA, EGDT…DLNV, and AGKT…KASR.

In terms of assembly, interacts with TTN/titin and YBX1.

It is found in the nucleus. May play an important role in endothelial cell activation. May act as a nuclear transcription factor that negatively regulates the expression of cardiac genes. This chain is Ankyrin repeat domain-containing protein 1 (ANKRD1), found in Bos taurus (Bovine).